We begin with the raw amino-acid sequence, 341 residues long: Cyclic GMP-AMP synthase (341 aa).

Residue serine 56 participates in ATP binding. Residues aspartate 71 and aspartate 73 contribute to the active site. Aspartate 73 contributes to the Mg(2+) binding site. Asparagine 109 contacts ATP. Aspartate 123 is a catalytic residue. Aspartate 123 is a Mg(2+) binding site. ATP is bound by residues leucine 192 and aspartate 238.

It belongs to the CD-NTase family. B04 subfamily. Monomer. Mg(2+) is required as a cofactor.

The catalysed reaction is GTP + ATP = 3',3'-cGAMP + 2 diphosphate. Functionally, cyclic nucleotide synthase (second messenger synthase) of a CBASS antivirus system. CBASS (cyclic oligonucleotide-based antiphage signaling system) provides immunity against bacteriophage. The CD-NTase protein synthesizes cyclic nucleotides in response to infection; these serve as specific second messenger signals. The signals activate a diverse range of effectors, leading to bacterial cell death and thus abortive phage infection. A type II-A(GA) CBASS system. Catalyzes the synthesis of 3'3'-cyclic GMP-AMP (3'3'-cGAMP) from GTP and ATP, a second messenger in cell signal transduction. May make another product. Controls the activity of the CBASS cGAMP-activated phospholipase effector protein. This chain is Cyclic GMP-AMP synthase, found in Bacteroides fragilis.